Here is a 486-residue protein sequence, read N- to C-terminus: Chromosomal replication initiator protein DnaA (486 aa).

The segment at 1–79 (MEKSKNIWSL…GYNNIVIVFT (79 aa)) is domain I, interacts with DnaA modulators. The domain II stretch occupies residues 79–141 (TNQPPKTHSN…EEEPTNFKNP (63 aa)). The interval 142-358 (FLKKRYTFEN…AAVTKLKAYI (217 aa)) is domain III, AAA+ region. The ATP site is built by glycine 186, glycine 188, lysine 189, and threonine 190. Positions 359 to 486 (DLDNIEIDIE…TELMNKIKKN (128 aa)) are domain IV, binds dsDNA.

The protein belongs to the DnaA family. In terms of assembly, oligomerizes as a right-handed, spiral filament on DNA at oriC.

It localises to the cytoplasm. Functionally, plays an essential role in the initiation and regulation of chromosomal replication. ATP-DnaA binds to the origin of replication (oriC) to initiate formation of the DNA replication initiation complex once per cell cycle. Binds the DnaA box (a 9 base pair repeat at the origin) and separates the double-stranded (ds)DNA. Forms a right-handed helical filament on oriC DNA; dsDNA binds to the exterior of the filament while single-stranded (ss)DNA is stabiized in the filament's interior. The ATP-DnaA-oriC complex binds and stabilizes one strand of the AT-rich DNA unwinding element (DUE), permitting loading of DNA polymerase. After initiation quickly degrades to an ADP-DnaA complex that is not apt for DNA replication. Binds acidic phospholipids. In terms of biological role, binds to the bpuR promoter, possibly at 5'-TTTTTAAA-3'. This chain is Chromosomal replication initiator protein DnaA, found in Borreliella burgdorferi (strain ATCC 35210 / DSM 4680 / CIP 102532 / B31) (Borrelia burgdorferi).